A 291-amino-acid polypeptide reads, in one-letter code: D-alanyl-D-alanine carboxypeptidase DacB2 (291 aa).

The first 22 residues, 1–22, serve as a signal peptide directing secretion; the sequence is MRKLMTATAALCACAVTVSAGA. Ser69 serves as the catalytic Acyl-ester intermediate. Lys72 functions as the Proton acceptor in the catalytic mechanism. Residue Ser124 is part of the active site.

Belongs to the peptidase S11 family.

It is found in the periplasm. It functions in the pathway cell wall biogenesis; peptidoglycan biosynthesis. With respect to regulation, inhibited by the beta-lactam antibiotic meropenem. Inhibited by the non-specific inhibitor phenylmethylsulfonyl fluoride (PMSF). In terms of biological role, probably cleaves the terminal D-Ala-D-Ala dipeptide of the peptidoglycan stem peptide. Shows significant D,D-carboxypeptidase activity in vitro. Acts on the synthetic penta-peptide substrate Penta-DAP (L-Ala-gamma-D-Gln-DAP-D-Ala-D-Ala). Also shows weak activity on Penta-Lys (L-Ala-gamma-Glu-L-Lys-D-Ala-D-Ala). The catalytic domain binds weakly to peptidoglycan in vitro. Plays an important role in the maintenance of colony morphology and cell wall permeability and integrity. The chain is D-alanyl-D-alanine carboxypeptidase DacB2 from Mycobacterium tuberculosis (strain ATCC 25618 / H37Rv).